The sequence spans 473 residues: Photosystem II CP43 reaction center protein (473 aa).

Residues 1–14 (MKTLYSLRRSYPVE) constitute a propeptide that is removed on maturation. The residue at position 15 (Thr15) is an N-acetylthreonine. Thr15 bears the Phosphothreonine mark. Transmembrane regions (helical) follow at residues 69–93 (LFEVAHFVPEKPMYEQGLILLPHLA), 134–155 (LIGPETLEESFPFFGYVWKDKN), 178–200 (KALYFGGLYDTWAPGGGDVRKIT), 255–275 (KPFAWARRAFVWSGEAYLSYS), and 291–312 (WFNNTAYPSEFYGPTGPEASQA). Glu367 is a binding site for [CaMn4O5] cluster. Residues 447–471 (RARAAAAGFEKGIDRDTEPVLFMNP) traverse the membrane as a helical segment.

This sequence belongs to the PsbB/PsbC family. PsbC subfamily. PSII is composed of 1 copy each of membrane proteins PsbA, PsbB, PsbC, PsbD, PsbE, PsbF, PsbH, PsbI, PsbJ, PsbK, PsbL, PsbM, PsbT, PsbX, PsbY, PsbZ, Psb30/Ycf12, at least 3 peripheral proteins of the oxygen-evolving complex and a large number of cofactors. It forms dimeric complexes. The cofactor is Binds multiple chlorophylls and provides some of the ligands for the Ca-4Mn-5O cluster of the oxygen-evolving complex. It may also provide a ligand for a Cl- that is required for oxygen evolution. PSII binds additional chlorophylls, carotenoids and specific lipids..

The protein localises to the plastid. It localises to the chloroplast thylakoid membrane. Functionally, one of the components of the core complex of photosystem II (PSII). It binds chlorophyll and helps catalyze the primary light-induced photochemical processes of PSII. PSII is a light-driven water:plastoquinone oxidoreductase, using light energy to abstract electrons from H(2)O, generating O(2) and a proton gradient subsequently used for ATP formation. This chain is Photosystem II CP43 reaction center protein, found in Zygnema circumcarinatum (Green alga).